Reading from the N-terminus, the 507-residue chain is ATP synthase subunit alpha, chloroplastic (507 aa).

Residue 170-177 coordinates ATP; sequence GDRQTGKT.

The protein belongs to the ATPase alpha/beta chains family. As to quaternary structure, F-type ATPases have 2 components, CF(1) - the catalytic core - and CF(0) - the membrane proton channel. CF(1) has five subunits: alpha(3), beta(3), gamma(1), delta(1), epsilon(1). CF(0) has four main subunits: a, b, b' and c.

It is found in the plastid. It localises to the chloroplast thylakoid membrane. The enzyme catalyses ATP + H2O + 4 H(+)(in) = ADP + phosphate + 5 H(+)(out). Produces ATP from ADP in the presence of a proton gradient across the membrane. The alpha chain is a regulatory subunit. The protein is ATP synthase subunit alpha, chloroplastic of Liriodendron tulipifera (Tuliptree).